The primary structure comprises 268 residues: 3-methyl-2-oxobutanoate hydroxymethyltransferase (268 aa).

Aspartate 44 and aspartate 83 together coordinate Mg(2+). Residues aspartate 44–serine 45, aspartate 83, and lysine 113 contribute to the 3-methyl-2-oxobutanoate site. A Mg(2+)-binding site is contributed by glutamate 115. Glutamate 183 acts as the Proton acceptor in catalysis.

Belongs to the PanB family. As to quaternary structure, homodecamer; pentamer of dimers. The cofactor is Mg(2+).

The protein resides in the cytoplasm. The enzyme catalyses 3-methyl-2-oxobutanoate + (6R)-5,10-methylene-5,6,7,8-tetrahydrofolate + H2O = 2-dehydropantoate + (6S)-5,6,7,8-tetrahydrofolate. It functions in the pathway cofactor biosynthesis; (R)-pantothenate biosynthesis; (R)-pantoate from 3-methyl-2-oxobutanoate: step 1/2. In terms of biological role, catalyzes the reversible reaction in which hydroxymethyl group from 5,10-methylenetetrahydrofolate is transferred onto alpha-ketoisovalerate to form ketopantoate. This is 3-methyl-2-oxobutanoate hydroxymethyltransferase from Leptospira biflexa serovar Patoc (strain Patoc 1 / Ames).